The following is a 519-amino-acid chain: Alkaline phosphatase, tissue-nonspecific isozyme (519 aa).

Positions 1-16 are cleaved as a signal peptide; that stretch reads MKAFLLTLLAQLCSAS. D59 contacts Mg(2+). Zn(2+) contacts are provided by D59 and S109. The Phosphoserine intermediate role is filled by S109. A disulfide bridge connects residues C138 and C200. N-linked (GlcNAc...) asparagine glycosylation is present at N139. T172 provides a ligand contact to Mg(2+). Residue N229 is glycosylated (N-linked (GlcNAc...) asparagine). Residue E234 coordinates Ca(2+). A glycan (N-linked (GlcNAc...) asparagine) is linked at N278. Positions 289 and 290 each coordinate Ca(2+). The N-linked (GlcNAc...) asparagine glycan is linked to N302. Residue D305 participates in Ca(2+) binding. E331 provides a ligand contact to Mg(2+). Zn(2+)-binding residues include D336, H340, D377, and H378. A glycan (N-linked (GlcNAc...) asparagine) is linked at N429. H453 lines the Zn(2+) pocket. Cysteines 488 and 496 form a disulfide. A lipid anchor (GPI-anchor amidated serine) is attached at S498. Residues 499–519 constitute a propeptide, removed in mature form; sequence AARPAATATLLPVLLLLLLLC.

The protein belongs to the alkaline phosphatase family. As to quaternary structure, homodimer. Mg(2+) serves as cofactor. The cofactor is Zn(2+). It depends on Ca(2+) as a cofactor.

It is found in the cell membrane. The protein resides in the extracellular vesicle membrane. It catalyses the reaction a phosphate monoester + H2O = an alcohol + phosphate. The catalysed reaction is diphosphate + H2O = 2 phosphate + H(+). It carries out the reaction pyridoxal 5'-phosphate + H2O = pyridoxal + phosphate. The enzyme catalyses phosphoethanolamine + H2O = ethanolamine + phosphate. It catalyses the reaction ATP + H2O = ADP + phosphate + H(+). The catalysed reaction is ADP + H2O = AMP + phosphate + H(+). It carries out the reaction AMP + H2O = adenosine + phosphate. Its function is as follows. Alkaline phosphatase that metabolizes various phosphate compounds and plays a key role in skeletal mineralization and adaptive thermogenesis. Has broad substrate specificity and can hydrolyze a considerable variety of compounds: however, only a few substrates, such as diphosphate (inorganic pyrophosphate; PPi) and pyridoxal 5'-phosphate (PLP) are natural substrates. Plays an essential role in skeletal and dental mineralization via its ability to hydrolyze extracellular diphosphate, a potent mineralization inhibitor, to phosphate: it thereby promotes hydroxyapatite crystal formation and increases inorganic phosphate concentration. Catalyzes dephosphorylation of PLP to pyridoxal (PL), the transportable form of vitamin B6, in order to provide a sufficient amount of PLP in the brain, an essential cofactor for enzymes catalyzing the synthesis of diverse neurotransmitters. Additionally, also able to mediate ATP degradation in a stepwise manner to adenosine, thereby regulating the availability of ligands for purinergic receptors. Involved in the establishment and growth of feather germs. This Gallus gallus (Chicken) protein is Alkaline phosphatase, tissue-nonspecific isozyme (ALPL).